A 520-amino-acid chain; its full sequence is GMP synthase [glutamine-hydrolyzing] (520 aa).

The Glutamine amidotransferase type-1 domain occupies Lys12–Asp205. Catalysis depends on Cys89, which acts as the Nucleophile. Residues His179 and Glu181 contribute to the active site. One can recognise a GMPS ATP-PPase domain in the interval Trp206 to Arg395. Ser233–Ser239 is a binding site for ATP.

In terms of assembly, homodimer.

It carries out the reaction XMP + L-glutamine + ATP + H2O = GMP + L-glutamate + AMP + diphosphate + 2 H(+). It functions in the pathway purine metabolism; GMP biosynthesis; GMP from XMP (L-Gln route): step 1/1. Functionally, catalyzes the synthesis of GMP from XMP. The protein is GMP synthase [glutamine-hydrolyzing] of Streptococcus equi subsp. zooepidemicus (strain H70).